Here is a 644-residue protein sequence, read N- to C-terminus: G-protein coupled receptor-associated protein LMBRD2 (644 aa).

At 1-4 the chain is on the extracellular side; the sequence is MGTV. A helical transmembrane segment spans residues 5–27; the sequence is SLAVQLFIVFLLTSYLLNKYSTI. Over 28-31 the chain is Cytoplasmic; that stretch reads RKQN. Residues 32–52 traverse the membrane as a helical segment; sequence PIVTISTFIGWYFSLIIVFVL. Over 53–102 the chain is Extracellular; that stretch reads PLDVAITFFHKCENDRQRVLNTTSTPAPIVPECELPGGYVPDDVLFDLWR. The N-linked (GlcNAc...) asparagine glycan is linked to Asn-73. A helical transmembrane segment spans residues 103–123; sequence VVYWSAQILTWLILPLLQSYV. The Cytoplasmic segment spans residues 124 to 145; it reads TAGNFTIFGKIRAAVINNTVYY. A helical membrane pass occupies residues 146–166; that stretch reads AIYSLCFLAILIYAMFKGVSI. Topologically, residues 167 to 172 are extracellular; that stretch reads NIENLK. A helical transmembrane segment spans residues 173–193; sequence VILVSASNTWGLFLLVVLLGH. Over 194 to 369 the chain is Cytoplasmic; it reads GLVELPRSLW…RLQTPFCRVL (176 aa). Residues 216–245 adopt a coiled-coil conformation; that stretch reads YFDIEKLASEKSEAEENVKEIYKKVRVLFN. Residues 370 to 390 form a helical membrane-spanning segment; it reads GVVTVFMTFFVLFSECTFFVV. Residues 391–412 are Extracellular-facing; that stretch reads SYTVSPAAFVTEYASNRFHYKY. Residues 413-433 form a helical membrane-spanning segment; it reads TQFVAFGIIVYLITCAYFTIF. Residues 434–453 are Cytoplasmic-facing; sequence RLQIYKYYHLDPNGHTDENS. A helical membrane pass occupies residues 454-474; the sequence is ILFSAILLCRLTPPICLNFLG. Residues 475 to 502 lie on the Extracellular side of the membrane; it reads MIHMDSHVSMAKSFGVETQFTKLMGHLD. The chain crosses the membrane as a helical span at residues 503–523; sequence VIPILAKGINIYLPICIILLC. At 524 to 644 the chain is on the cytoplasmic side; sequence AIHYYRVGAY…PSSSGFFDDM (121 aa). The span at 567–576 shows a compositional bias: basic and acidic residues; it reads SIKRSNERNQ. The interval 567–644 is disordered; the sequence is SIKRSNERNQ…PSSSGFFDDM (78 aa). Positions 578–594 are enriched in low complexity; that stretch reads NQSWTNTITSNTSTTSN. The segment covering 621–644 has biased composition (polar residues); the sequence is VSSTTRISLSPTEHPSSSGFFDDM.

The protein belongs to the LIMR family.

It is found in the cell membrane. Functionally, may associate with G-protein coupled receptors and regulate downstream signaling pathways. The polypeptide is G-protein coupled receptor-associated protein LMBRD2 (Caenorhabditis briggsae).